A 291-amino-acid chain; its full sequence is 33 kDa chaperonin (291 aa).

2 disulfides stabilise this stretch: Cys237/Cys239 and Cys270/Cys273.

This sequence belongs to the HSP33 family. Under oxidizing conditions two disulfide bonds are formed involving the reactive cysteines. Under reducing conditions zinc is bound to the reactive cysteines and the protein is inactive.

It is found in the cytoplasm. Redox regulated molecular chaperone. Protects both thermally unfolding and oxidatively damaged proteins from irreversible aggregation. Plays an important role in the bacterial defense system toward oxidative stress. The sequence is that of 33 kDa chaperonin from Bacillus cereus (strain B4264).